The primary structure comprises 314 residues: Lysophospholipase D GDPD1 (314 aa).

Residues 1-3 are Extracellular-facing; it reads MSS. A helical transmembrane segment spans residues 4–24; sequence TAAFYLLSTLGGYLVTSFLLL. Over 25–195 the chain is Cytoplasmic; the sequence is KYPTLLHQRK…VEKCYKENSD (171 aa). One can recognise a GP-PDE domain in the interval 40–309; the sequence is SKHISHRGGA…DYPTKLRDFL (270 aa). Residues glutamate 72, aspartate 74, and histidine 87 each coordinate a divalent metal cation. A helical membrane pass occupies residues 196–216; that stretch reads IPILFSLQRVLLILGLFFTGL. Residues 217 to 314 lie on the Extracellular side of the membrane; it reads LPFVPIREQF…LRDFLHNFSA (98 aa).

The protein belongs to the glycerophosphoryl diester phosphodiesterase family. As to expression, widely expressed with high expression level in testis.

It is found in the cytoplasm. The protein localises to the membrane. Its subcellular location is the perinuclear region. The protein resides in the endoplasmic reticulum. The enzyme catalyses a 1-O-alkyl-sn-glycero-3-phosphocholine + H2O = a 1-O-alkyl-sn-glycero-3-phosphate + choline + H(+). The catalysed reaction is 1-hexadecanoyl-sn-glycero-3-phosphocholine + H2O = 1-hexadecanoyl-sn-glycero-3-phosphate + choline + H(+). It catalyses the reaction N-hexadecanoyl-sn-glycero-3-phosphoethanolamine + H2O = N-hexadecanoylethanolamine + sn-glycerol 3-phosphate + H(+). It carries out the reaction N-(5Z,8Z,11Z,14Z-eicosatetraenoyl)-1-(9Z-octadecenoyl)-sn-glycero-3-phosphoethanolamine + H2O = N-(5Z,8Z,11Z,14Z-eicosatetraenoyl)-ethanolamine + 1-(9Z-octadecenoyl)-sn-glycero-3-phosphate + H(+). The enzyme catalyses N,1-di-(9Z-octadecenoyl)-sn-glycero-3-phosphoethanolamine + H2O = N-(9Z-octadecenoyl) ethanolamine + 1-(9Z-octadecenoyl)-sn-glycero-3-phosphate + H(+). The catalysed reaction is N-hexadecanoyl-1-(9Z-octadecenoyl)-sn-glycero-3-phosphoethanolamine + H2O = N-hexadecanoylethanolamine + 1-(9Z-octadecenoyl)-sn-glycero-3-phosphate + H(+). It catalyses the reaction 1-O-(1Z-octadecenyl)-sn-glycero-3-phospho-N-hexadecanoyl-ethanolamine + H2O = 1-O-(1Z-octadecenyl)-sn-glycero-3-phosphate + N-hexadecanoylethanolamine + H(+). It carries out the reaction 1-hexadecanoyl-sn-glycero-3-phosphoethanolamine + H2O = 1-hexadecanoyl-sn-glycero-3-phosphate + ethanolamine + H(+). The enzyme catalyses 1-O-hexadecyl-sn-glycero-3-phosphocholine + H2O = 1-O-hexadecyl-sn-glycero-3-phosphate + choline + H(+). The catalysed reaction is 1-(9Z-octadecenoyl)-sn-glycero-3-phosphocholine + H2O = 1-(9Z-octadecenoyl)-sn-glycero-3-phosphate + choline + H(+). It catalyses the reaction N,1-dihexadecanoyl-sn-glycero-3-phosphoethanolamine + H2O = N-hexadecanoylethanolamine + 1-hexadecanoyl-sn-glycero-3-phosphate + H(+). It carries out the reaction 1-O-(1Z-octadecenyl)-sn-glycero-3-phospho-(N-5Z,8Z,11Z,14Z-eicosatetraenoyl)-ethanolamine + H2O = 1-O-(1Z-octadecenyl)-sn-glycero-3-phosphate + N-(5Z,8Z,11Z,14Z-eicosatetraenoyl)-ethanolamine + H(+). The enzyme catalyses 1-O-(1Z-octadecenyl)-sn-glycero-3-phospho-(N-9Z-octadecenoyl)-ethanolamine + H2O = 1-O-(1Z-octadecenyl)-sn-glycero-3-phosphate + N-(9Z-octadecenoyl) ethanolamine + H(+). With respect to regulation, lysophospholipase D activity is increased by magnesium and manganese and inhibited by calcium in a concentration dependent manner. Loss of lysophospholipase D activity by addition of EDTA. Its function is as follows. Hydrolyzes lysoglycerophospholipids to produce lysophosphatidic acid (LPA) and the corresponding amines. Shows a preference for 1-O-alkyl-sn-glycero-3-phosphocholine (lyso-PAF), lysophosphatidylethanolamine (lyso-PE) and lysophosphatidylcholine (lyso-PC). May be involved in bioactive N-acylethanolamine biosynthesis from both N-acyl-lysoplasmenylethanolamin (N-acyl-lysoPlsEt) and N-acyl-lysophosphatidylethanolamin (N-acyl-lysoPE). In addition, hydrolyzes glycerophospho-N-acylethanolamine to N-acylethanolamine. Does not display glycerophosphodiester phosphodiesterase activity, since it cannot hydrolyze either glycerophosphoinositol or glycerophosphocholine. The polypeptide is Lysophospholipase D GDPD1 (Homo sapiens (Human)).